The chain runs to 497 residues: Cytochrome P450 71A16 (497 aa).

A helical transmembrane segment spans residues 1–21; it reads MEMMILISLCLTTFLTILLFF. Heme is bound at residue Cys-439.

Belongs to the cytochrome P450 family. The cofactor is heme.

It localises to the membrane. Possesses triterpene oxidizing activity. Catalyzes the C23 hydroxylation of marneral to form 23-hydroxymarneral. Catalyzes the C23 hydroxylation of marnerol to form 23-hydroxymarnerol. This is Cytochrome P450 71A16 (CYP71A16) from Arabidopsis thaliana (Mouse-ear cress).